Reading from the N-terminus, the 195-residue chain is Glycerol-3-phosphate acyltransferase (195 aa).

Transmembrane regions (helical) follow at residues Glu3–Thr23, Gly51–Gly71, Leu79–Phe99, Ile111–Val131, and Leu153–Val173.

This sequence belongs to the PlsY family. As to quaternary structure, probably interacts with PlsX.

Its subcellular location is the cell membrane. It catalyses the reaction an acyl phosphate + sn-glycerol 3-phosphate = a 1-acyl-sn-glycero-3-phosphate + phosphate. It participates in lipid metabolism; phospholipid metabolism. Its function is as follows. Catalyzes the transfer of an acyl group from acyl-phosphate (acyl-PO(4)) to glycerol-3-phosphate (G3P) to form lysophosphatidic acid (LPA). This enzyme utilizes acyl-phosphate as fatty acyl donor, but not acyl-CoA or acyl-ACP. The polypeptide is Glycerol-3-phosphate acyltransferase (Syntrophomonas wolfei subsp. wolfei (strain DSM 2245B / Goettingen)).